We begin with the raw amino-acid sequence, 307 residues long: Golgi to ER traffic protein 2 (307 aa).

At 1 to 173 (MSDSTDSPAV…QAYDTYQQKL (173 aa)) the chain is on the cytoplasmic side. Residues 41 to 52 (LSQGSSVKTTGV) are compositionally biased toward polar residues. A disordered region spans residues 41-73 (LSQGSSVKTTGVKSVLDEPQPTATSSAIHDEDP). A helical transmembrane segment spans residues 174–194 (WKSRFLVIRVVVTLFNFFYHY). Residues 195–220 (LNVPSFHASNYSYVRDLAQDEFPVRN) lie on the Lumenal side of the membrane. A helical transmembrane segment spans residues 221 to 240 (FFTWFAAFEVIIVLQYYTVF). Over 241 to 284 (HKLGLFHAANQNSMIMKLMSMGSMVLPQLNTYQPLVARFLGYYE) the chain is Cytoplasmic. The chain crosses the membrane as a helical span at residues 285–305 (LFGIIFGDLSLVIVLFGLLSF). Topologically, residues 306 to 307 (TK) are lumenal.

It belongs to the GET2 family. Component of the Golgi to ER traffic (GET) complex, which is composed of GET1, GET2 and GET3. Within the complex, GET1 and GET2 form a heterotetramer which is stabilized by phosphatidylinositol binding and which binds to the GET3 homodimer.

The protein resides in the endoplasmic reticulum membrane. The protein localises to the golgi apparatus membrane. Required for the post-translational delivery of tail-anchored (TA) proteins to the endoplasmic reticulum. Together with GET1, acts as a membrane receptor for soluble GET3, which recognizes and selectively binds the transmembrane domain of TA proteins in the cytosol. The GET complex cooperates with the HDEL receptor ERD2 to mediate the ATP-dependent retrieval of resident ER proteins that contain a C-terminal H-D-E-L retention signal from the Golgi to the ER. The protein is Golgi to ER traffic protein 2 of Candida tropicalis (strain ATCC MYA-3404 / T1) (Yeast).